A 314-amino-acid chain; its full sequence is Ribonuclease Z (314 aa).

The Zn(2+) site is built by His60, His62, Asp64, His65, His140, Asp209, and His269. Asp64 functions as the Proton acceptor in the catalytic mechanism.

The protein belongs to the RNase Z family. As to quaternary structure, homodimer. Zn(2+) is required as a cofactor.

The catalysed reaction is Endonucleolytic cleavage of RNA, removing extra 3' nucleotides from tRNA precursor, generating 3' termini of tRNAs. A 3'-hydroxy group is left at the tRNA terminus and a 5'-phosphoryl group is left at the trailer molecule.. Zinc phosphodiesterase, which displays some tRNA 3'-processing endonuclease activity. Probably involved in tRNA maturation, by removing a 3'-trailer from precursor tRNA. This Methanococcus maripaludis (strain C5 / ATCC BAA-1333) protein is Ribonuclease Z.